A 580-amino-acid polypeptide reads, in one-letter code: mRNA cap guanine-N(7) methyltransferase (580 aa).

Composition is skewed to polar residues over residues 1-17 (MSGSKQGSEKASITSLI) and 25-53 (EATSVSTQNQSPKTQITQTENVEVQNSDL). The disordered stretch occupies residues 1 to 222 (MSGSKQGSEK…PVEAQPYSRL (222 aa)). A compositionally biased stretch (basic and acidic residues) spans 54-67 (KVTENKPKNTEMKP). The span at 69–90 (DPNTNASTTENTPITTSNAQVS) shows a compositional bias: polar residues. Positions 102–154 (REPEEAQNRYDRYVPRVDNRRRGEPRVAEVRQDPRYAKYLRQDQEERRIRRPD) are enriched in basic and acidic residues. Over residues 191–214 (ESEENGDEQQGDDEEETPGNEEPV) the composition is skewed to acidic residues. Residues 271–579 (SPIYKLRNFN…FYLGFAFEKL (309 aa)) enclose the mRNA cap 0 methyltransferase domain. 280–281 (NN) is a binding site for mRNA. Residues K284, C308, D330, D376, Q406, and Y411 each contribute to the S-adenosyl-L-methionine site.

This sequence belongs to the class I-like SAM-binding methyltransferase superfamily. mRNA cap 0 methyltransferase family.

The protein localises to the nucleus. The catalysed reaction is a 5'-end (5'-triphosphoguanosine)-ribonucleoside in mRNA + S-adenosyl-L-methionine = a 5'-end (N(7)-methyl 5'-triphosphoguanosine)-ribonucleoside in mRNA + S-adenosyl-L-homocysteine. Its function is as follows. Responsible for methylating the 5'-cap structure of mRNAs. This is mRNA cap guanine-N(7) methyltransferase (ABD1) from Meyerozyma guilliermondii (strain ATCC 6260 / CBS 566 / DSM 6381 / JCM 1539 / NBRC 10279 / NRRL Y-324) (Yeast).